A 418-amino-acid chain; its full sequence is MTYLEIEGTNHLSGNVTISGAKNAALPLIVSSILAKNEVKINNVPNVADIKTLISLLENLGAKVNFQNNSALLNTNTLNQTIAKYDIVRKMRASILTLGPLLARFGHCEVSLPGGCAIGQRPIDLHLLALEKMGANIQIKQGYVVASGNLKGNEILFDKITVTGSENIIMAAALAKGKTKLLNVAKEPEVVQLCEVLKDAGLEIKGIGTDELEIYGSDGELLEFKEFSVIPDRIEAGTYLCAGAITNSKITLDKVNATHLSAVLAKLHQMGFETLIAEDSITLLPAKEIKPVEIMTSEYPGFPTDMQAQFMALALKANGTSIIDERLFENRFMHVSELLRMGADIKLNGHIATIVGGKELNAADVMATDLRASSALILAALAAKGTSKVHRIYHLDRGYENLEEKFKGLGVKITRLEE.

22-23 contributes to the phosphoenolpyruvate binding site; the sequence is KN. Residue arginine 92 participates in UDP-N-acetyl-alpha-D-glucosamine binding. The active-site Proton donor is cysteine 116. Cysteine 116 carries the 2-(S-cysteinyl)pyruvic acid O-phosphothioketal modification. UDP-N-acetyl-alpha-D-glucosamine is bound by residues 121–125, aspartate 305, and leucine 327; that span reads RPIDL.

It belongs to the EPSP synthase family. MurA subfamily.

The protein resides in the cytoplasm. The catalysed reaction is phosphoenolpyruvate + UDP-N-acetyl-alpha-D-glucosamine = UDP-N-acetyl-3-O-(1-carboxyvinyl)-alpha-D-glucosamine + phosphate. It functions in the pathway cell wall biogenesis; peptidoglycan biosynthesis. In terms of biological role, cell wall formation. Adds enolpyruvyl to UDP-N-acetylglucosamine. This Campylobacter jejuni (strain RM1221) protein is UDP-N-acetylglucosamine 1-carboxyvinyltransferase.